Reading from the N-terminus, the 172-residue chain is Shikimate kinase (172 aa).

11-16 contributes to the ATP binding site; that stretch reads GAGKST. S15 contributes to the Mg(2+) binding site. Residues D33, R57, and G79 each contribute to the substrate site. Position 117 (R117) interacts with ATP. R136 contacts substrate. Position 153 (R153) interacts with ATP.

This sequence belongs to the shikimate kinase family. Monomer. It depends on Mg(2+) as a cofactor.

Its subcellular location is the cytoplasm. The catalysed reaction is shikimate + ATP = 3-phosphoshikimate + ADP + H(+). The protein operates within metabolic intermediate biosynthesis; chorismate biosynthesis; chorismate from D-erythrose 4-phosphate and phosphoenolpyruvate: step 5/7. In terms of biological role, catalyzes the specific phosphorylation of the 3-hydroxyl group of shikimic acid using ATP as a cosubstrate. The protein is Shikimate kinase of Pseudomonas savastanoi pv. phaseolicola (strain 1448A / Race 6) (Pseudomonas syringae pv. phaseolicola (strain 1448A / Race 6)).